Consider the following 219-residue polypeptide: FMSPTYLGIPLIAVALTLPWILFPTPSARWLNNRLITLQGWFINRFTQQLLLPLNLGGHKWAALLTSLMLFLITLNMLGLLPYTFTPTTQLSLNMGLAVPLWLATVIIGMRNQPTAALGHLLPEGTPVPLIPVLIIIETISLFIRPLALGVRLTANLTAGHLLIQLIATAAFVLLPLMPTVAILTSIVLFLLTLLEIAVAMIQAYVFVLLLSLYLQENV.

Transmembrane regions (helical) follow at residues Pro4–Pro24, Trp61–Leu81, Gln90–Met110, Glu124–Ile144, Phe172–Leu192, and Leu194–Tyr214.

It belongs to the ATPase A chain family. Component of the ATP synthase complex composed at least of ATP5F1A/subunit alpha, ATP5F1B/subunit beta, ATP5MC1/subunit c (homooctomer), MT-ATP6/subunit a, MT-ATP8/subunit 8, ATP5ME/subunit e, ATP5MF/subunit f, ATP5MG/subunit g, ATP5MK/subunit k, ATP5MJ/subunit j, ATP5F1C/subunit gamma, ATP5F1D/subunit delta, ATP5F1E/subunit epsilon, ATP5PF/subunit F6, ATP5PB/subunit b, ATP5PD/subunit d, ATP5PO/subunit OSCP. ATP synthase complex consists of a soluble F(1) head domain (subunits alpha(3) and beta(3)) - the catalytic core - and a membrane F(0) domain - the membrane proton channel (subunits c, a, 8, e, f, g, k and j). These two domains are linked by a central stalk (subunits gamma, delta, and epsilon) rotating inside the F1 region and a stationary peripheral stalk (subunits F6, b, d, and OSCP). Interacts with DNAJC30; interaction is direct.

The protein resides in the mitochondrion inner membrane. It carries out the reaction H(+)(in) = H(+)(out). In terms of biological role, subunit a, of the mitochondrial membrane ATP synthase complex (F(1)F(0) ATP synthase or Complex V) that produces ATP from ADP in the presence of a proton gradient across the membrane which is generated by electron transport complexes of the respiratory chain. ATP synthase complex consist of a soluble F(1) head domain - the catalytic core - and a membrane F(1) domain - the membrane proton channel. These two domains are linked by a central stalk rotating inside the F(1) region and a stationary peripheral stalk. During catalysis, ATP synthesis in the catalytic domain of F(1) is coupled via a rotary mechanism of the central stalk subunits to proton translocation. With the subunit c (ATP5MC1), forms the proton-conducting channel in the F(0) domain, that contains two crucial half-channels (inlet and outlet) that facilitate proton movement from the mitochondrial intermembrane space (IMS) into the matrix. Protons are taken up via the inlet half-channel and released through the outlet half-channel, following a Grotthuss mechanism. This is ATP synthase F(0) complex subunit a from Oncorhynchus masou (Cherry salmon).